The chain runs to 754 residues: MESSDVELDLQRSVQAVLRELSTQAPALQSNQGMWRWSLHKKVERDPGKSPVLVRILLRELEKAESQDLRHVIIPLLHTVMYVLTKATGITEELYQRIYAFCTRLLTLPTPYCTVALDCAIRLKTEMAVPGTLYQRMVIAEQNLTNELYPYQERVFLFVDPELVSASVCSALLLEIEAAQAQQTPETCMRHVVSHALQAALGEACHAGALHRKLQASPRRTLEHYFHAVVAALEQMASEASPSREGHVERLEEIYCSLLGPAAGRCGGDLVQERPPSIPLPSPYITFHLWTGEEQLWKELVLFLRPRSQLRLSADLEVLDLQGLRPDRELARVSVLSTDSGIERDLPTGADELPAPGSPEMERAGLQRKGGIKKRAWPLDFLMPGSWDGPPGLHRRTGRPSGDGEMLPGVSRLHTARVLVLGDDRMLGRLAQAYHRLRKRETQKFCLTPRLSLQLYYIPVLAPEKPAASRQPELGELATFLGRVDPWYQSNVNTLCPAIHKLAEMPPSLDTSRTVDPFILDVITYYIRMGTQPIYFQIYTVKIFFSDLSQDPTEDIFLIELKVKIQDSKFPKDGFSPRRRGVAEGPGAELSLCYQKALLSHRPREVTVSLRATGLILKAIPASDTEVSGSSHCPLPAAPVTDHTCLNVNVTEVVKSSNLAGKSFSTVTNTFRTNNIQIQSRDQRLLTLSLDKDDQRTFRDVVRFEVAPCPEPCSGAQKSKAPWLNLHGQQEVEAIKAKPKPLLMPINTFSGIVQ.

A disordered region spans residues 343 to 363 (ERDLPTGADELPAPGSPEMER).

Heterodimer of a catalytic subunit (PIK3CG) and a regulatory (PIK3R6) subunit. The binding of PIK3R6 to PIK3CG may exclude the binding of PIK3R5 to PIK3CG. Interacts with beta-gamma G protein dimers. Interacts with PDE3B and RAPGEF3; form a signaling complex that regulates phosphatidylinositol 3-kinase gamma in angiogenesis.

The protein resides in the cytoplasm. It localises to the cell membrane. Regulatory subunit of the PI3K gamma complex. Acts as an adapter to drive activation of PIK3CG by beta-gamma G protein dimers. The PIK3CG:PIK3R6 heterodimer is much less sensitive to beta-gamma G protein dimers than PIK3CG:PIK3R5 and its membrane recruitment and beta-gamma G protein dimer-dependent activation requires HRAS bound to PIK3CG. Recruits of the PI3K gamma complex to a PDE3B:RAPGEF3 signaling complex involved in angiogenesis; signaling seems to involve RRAS. In Homo sapiens (Human), this protein is Phosphoinositide 3-kinase regulatory subunit 6 (PIK3R6).